A 275-amino-acid polypeptide reads, in one-letter code: Tryptophan synthase alpha chain (275 aa).

Residues Glu49 and Asp60 each act as proton acceptor in the active site.

This sequence belongs to the TrpA family. In terms of assembly, tetramer of two alpha and two beta chains.

It catalyses the reaction (1S,2R)-1-C-(indol-3-yl)glycerol 3-phosphate + L-serine = D-glyceraldehyde 3-phosphate + L-tryptophan + H2O. It participates in amino-acid biosynthesis; L-tryptophan biosynthesis; L-tryptophan from chorismate: step 5/5. Functionally, the alpha subunit is responsible for the aldol cleavage of indoleglycerol phosphate to indole and glyceraldehyde 3-phosphate. The protein is Tryptophan synthase alpha chain of Psychrobacter sp. (strain PRwf-1).